The chain runs to 459 residues: MKKLWGGRFTKTAEEWVDEFGASIPFDQELVEEDIEGSLAHVTMLGECGILPEGDVEQIKGGLIRLLEKAKQGELKFSIAYEDIHLNIEKMLIDDIGPVGGKLHTGRSRNDQVATDMHLYLRKRVEEILGLIRGMQRALVAQAEKHVETIMPGYTHLQRAQPISFAHHLLAYFWMLERDYERFSESQKRINRSPLGAGALAGTTFPIDRHRTAELLGFADIYENSLDAVSDRDFIIEFLSNSSMLMMHLSRLAEELILWSSQEFQFIELDDAFATGSSIMPQKKNPDMAELIRGKTGRVYGHLMALLTVMKGLPLAYNKDMQEDKEGMFDTVKTVIGSLKIFTGMIETMNVRTDVMERATKQDFSNATELADYLAAKGVPFREAHEIVGKLVLHCIEQGVFLADLPLDVYKEASPLFEEDIYDALHPRTAVNRRNSAGGTGFAEVRAALAKAKQLLSTP.

It belongs to the lyase 1 family. Argininosuccinate lyase subfamily.

Its subcellular location is the cytoplasm. It catalyses the reaction 2-(N(omega)-L-arginino)succinate = fumarate + L-arginine. It functions in the pathway amino-acid biosynthesis; L-arginine biosynthesis; L-arginine from L-ornithine and carbamoyl phosphate: step 3/3. This chain is Argininosuccinate lyase, found in Geobacillus kaustophilus (strain HTA426).